The sequence spans 142 residues: Augurin-A (142 aa).

The N-terminal stretch at 1–28 (MLSEKFHLRLLTLLTLLTALSLTDVASE) is a signal peptide. Propeptides lie at residues 29–66 (SKLE…LKRP) and 127–142 (GAAS…YDYY).

The protein belongs to the augurin family.

Its subcellular location is the secreted. The protein resides in the cytoplasm. The protein localises to the apical cell membrane. Its function is as follows. Probable hormone. Required for the proper formation of the central nervous system by attenuating cell proliferation during development. The sequence is that of Augurin-A from Danio rerio (Zebrafish).